Reading from the N-terminus, the 393-residue chain is PPE family protein PPE26 (393 aa).

This sequence belongs to the mycobacterial PPE family. Interacts with human TLR2.

Functionally, probably plays a key role in regulating innate and adaptive immune responses through human Toll-like receptor 2 (TLR2). Interacts with TLR2, leading to the subsequent activation of the mitogen-activated protein kinase (MAPK) and nuclear factor kappa B (NF-kappa-B) signaling pathways. Stimulates macrophage activation by augmenting pro-inflammatory cytokine production (TNF-alpha, IL-6 and IL-12p40) and the expression of cell surface molecules (CD80, CD86, MHC class I and II). Also participates in adaptive immunity by directing Th1-polarised immune responses. In Mycobacterium tuberculosis (strain ATCC 25618 / H37Rv), this protein is PPE family protein PPE26.